Consider the following 24-residue polypeptide: Sperm protamine P3 (24 aa).

Residues 1–24 (RRRRRRRRHRRRRGRRGRRSRGRR) are disordered.

As to expression, testis.

The protein localises to the nucleus. Its subcellular location is the chromosome. In terms of biological role, protamines substitute for histones in the chromatin of sperm during the haploid phase of spermatogenesis. They compact sperm DNA into a highly condensed, stable and inactive complex. This is Sperm protamine P3 from Octopus vulgaris (Common octopus).